The primary structure comprises 124 residues: Small ribosomal subunit protein uS12 (124 aa).

A 3-methylthioaspartic acid modification is found at aspartate 89.

The protein belongs to the universal ribosomal protein uS12 family. Part of the 30S ribosomal subunit. Contacts proteins S8 and S17. May interact with IF1 in the 30S initiation complex.

In terms of biological role, with S4 and S5 plays an important role in translational accuracy. Interacts with and stabilizes bases of the 16S rRNA that are involved in tRNA selection in the A site and with the mRNA backbone. Located at the interface of the 30S and 50S subunits, it traverses the body of the 30S subunit contacting proteins on the other side and probably holding the rRNA structure together. The combined cluster of proteins S8, S12 and S17 appears to hold together the shoulder and platform of the 30S subunit. The chain is Small ribosomal subunit protein uS12 from Aliivibrio fischeri (strain ATCC 700601 / ES114) (Vibrio fischeri).